The primary structure comprises 54 residues: Hydrophobic protein RCI2A (54 aa).

A run of 2 helical transmembrane segments spans residues 2–22 (STAT…GVFL) and 32–52 (ICLV…IYVL).

Belongs to the UPF0057 (PMP3) family.

The protein localises to the membrane. The protein is Hydrophobic protein RCI2A (RCI2A) of Arabidopsis thaliana (Mouse-ear cress).